Here is a 278-residue protein sequence, read N- to C-terminus: Putative carbamate hydrolase RutD (278 aa).

The protein belongs to the AB hydrolase superfamily. Hydrolase RutD family.

The enzyme catalyses carbamate + 2 H(+) = NH4(+) + CO2. Involved in pyrimidine catabolism. May facilitate the hydrolysis of carbamate, a reaction that can also occur spontaneously. This is Putative carbamate hydrolase RutD from Yersinia enterocolitica serotype O:8 / biotype 1B (strain NCTC 13174 / 8081).